A 213-amino-acid chain; its full sequence is dTTP/UTP pyrophosphatase (213 aa).

The Proton acceptor role is filled by aspartate 92.

This sequence belongs to the Maf family. YhdE subfamily. It depends on a divalent metal cation as a cofactor.

The protein localises to the cytoplasm. It catalyses the reaction dTTP + H2O = dTMP + diphosphate + H(+). The enzyme catalyses UTP + H2O = UMP + diphosphate + H(+). In terms of biological role, nucleoside triphosphate pyrophosphatase that hydrolyzes dTTP and UTP. May have a dual role in cell division arrest and in preventing the incorporation of modified nucleotides into cellular nucleic acids. The protein is dTTP/UTP pyrophosphatase of Granulibacter bethesdensis (strain ATCC BAA-1260 / CGDNIH1).